The sequence spans 148 residues: SsrA-binding protein (148 aa).

Belongs to the SmpB family.

Its subcellular location is the cytoplasm. Required for rescue of stalled ribosomes mediated by trans-translation. Binds to transfer-messenger RNA (tmRNA), required for stable association of tmRNA with ribosomes. tmRNA and SmpB together mimic tRNA shape, replacing the anticodon stem-loop with SmpB. tmRNA is encoded by the ssrA gene; the 2 termini fold to resemble tRNA(Ala) and it encodes a 'tag peptide', a short internal open reading frame. During trans-translation Ala-aminoacylated tmRNA acts like a tRNA, entering the A-site of stalled ribosomes, displacing the stalled mRNA. The ribosome then switches to translate the ORF on the tmRNA; the nascent peptide is terminated with the 'tag peptide' encoded by the tmRNA and targeted for degradation. The ribosome is freed to recommence translation, which seems to be the essential function of trans-translation. In Pseudothermotoga lettingae (strain ATCC BAA-301 / DSM 14385 / NBRC 107922 / TMO) (Thermotoga lettingae), this protein is SsrA-binding protein.